Reading from the N-terminus, the 503-residue chain is AMP phosphorylase (503 aa).

Residues G168, 194 to 199 (SRAITS), and T203 each bind AMP. Residue D256 is the Proton donor of the active site. Positions 264 and 288 each coordinate AMP.

The protein belongs to the thymidine/pyrimidine-nucleoside phosphorylase family. Type 2 subfamily. As to quaternary structure, forms an exceptionally large macromolecular structure (&gt;40-mers) in solution.

It catalyses the reaction AMP + phosphate = alpha-D-ribose 1,5-bisphosphate + adenine. The catalysed reaction is CMP + phosphate = cytosine + alpha-D-ribose 1,5-bisphosphate. It carries out the reaction UMP + phosphate = alpha-D-ribose 1,5-bisphosphate + uracil. AMP phosphorolysis is allosterically regulated by the substrate AMP. In terms of biological role, catalyzes the conversion of AMP and phosphate to adenine and ribose 1,5-bisphosphate (R15P). Exhibits phosphorylase activity toward CMP, dCMP and UMP in addition to AMP. Functions in an archaeal AMP degradation pathway, together with R15P isomerase and RubisCO. This chain is AMP phosphorylase, found in Thermococcus kodakarensis (strain ATCC BAA-918 / JCM 12380 / KOD1) (Pyrococcus kodakaraensis (strain KOD1)).